Reading from the N-terminus, the 3926-residue chain is Hybrid PKS-NRPS synthetase LUC5 (3926 aa).

The region spanning 8–439 (REPIAIVGTA…GTNAHAIIES (432 aa)) is the Ketosynthase family 3 (KS3) domain. Residues C181, H318, and H359 each act as for beta-ketoacyl synthase activity in the active site. Positions 545–863 (VFTGQGAQWP…QGALTRNVHD (319 aa)) are malonyl-CoA:ACP transacylase (MAT) domain. The N-terminal hotdog fold stretch occupies residues 932–1065 (HPLLGTRSTE…GHLRVDFGSE (134 aa)). The dehydratase (DH) domain stretch occupies residues 932–1225 (HPLLGTRSTE…GLTCTSLLRP (294 aa)). The 297-residue stretch at 932–1228 (HPLLGTRSTE…CTSLLRPGPS (297 aa)) folds into the PKS/mFAS DH domain. The active-site Proton acceptor; for dehydratase activity is H964. The segment at 1081–1228 (LTSVNIERFY…CTSLLRPGPS (148 aa)) is C-terminal hotdog fold. D1138 acts as the Proton donor; for dehydratase activity in catalysis. Residues 1344–1572 (IRAVGENLTE…VNDFYDPSKY (229 aa)) form a C-methyltransferase (CMeT) domain region. The tract at residues 2091–2265 (TYLLAGCTGG…AASVIHIGMI (175 aa)) is ketoreductase (KR) domain 1. In terms of domain architecture, Carrier 1 spans 2371 to 2448 (EMLEVVEEEF…EICSTAVASL (78 aa)). An O-(pantetheine 4'-phosphoryl)serine modification is found at S2408. Residues 2474–2506 (VSGNGSSSSRAPTEFNSSTLKSGAQSTQGTSVS) show a composition bias toward polar residues. Positions 2474 to 2518 (VSGNGSSSSRAPTEFNSSTLKSGAQSTQGTSVSGDKDTNSVDGSA) are disordered. Residues 2507–2518 (GDKDTNSVDGSA) show a composition bias toward basic and acidic residues. Residues 2525-2810 (PLSFAQERIW…VNLLPLRFQL (286 aa)) are condensation. Positions 2979–3389 (DWVKRQPDAI…RIAGDSQIKL (411 aa)) are adenylation. Residues 3501-3580 (ETLTTTQERL…GMAAKIDGST (80 aa)) enclose the Carrier 2 domain. An O-(pantetheine 4'-phosphoryl)serine modification is found at S3540. A thiolester reductase (TE) domain region spans residues 3619-3840 (LTGATGFLGL…DFVPVEQVAD (222 aa)).

The protein in the C-terminal section; belongs to the NRP synthetase family.

The protein operates within mycotoxin biosynthesis. Its function is as follows. Hybrid PKS-NRPS synthetase; part of the gene cluster that mediates the biosynthesis of the mycotoxin lucilactaene and the lucilactaene-related compound NG-391 that act as cell cycle inhibitors with potent growth inhibitory activity against malarial parasites, moderate growth inhibitory activity against cancer cells, and no activity against bacteria and fungi. The hybrid PKS-NRPS synthetase LUC5 is responsible for the condensation of one acetyl-coenzyme A (CoA) unit with six malonyl-CoA units and the amide linkage of the arising heptaketide and homoserine, subsequently releasing the first intermediate prelucilactaene B, as an alcohol with an open ring structure. Lucilactaene and NG-391 lack the 7-methyl group present in fusarins which is inserted in fusarins by the C-methyltransferase (CMeT) domain of the fusarin synthetase FUS1, suggesting that the CMet domain of LUC5 does not methylate this position. Within the pathway, both the cytochrome P450 monooxygenase LUC2 and the hydrolase LUC6 function in parallel in modification of prelucilactaene B. LUC6 may catalyze the 2-pyrrolidone ring formation to form prelucilactaene C from prelucilactaene B, followed by C-15 hydroxylation by the same enzyme to give prelucilactaene D, which is then converted to prelucilactaene E by epoxidation, and finally to prelucilactaene F by cyclization. Prelucilactane D, prelucilactaene E, and prelucilactaene F can be converted to dihydrolucilactaene, NG391, and lucilactaene, respectively, via C-20 methyl group hydroxylation by the cytochrome P450 monooxygenase LUC2. However, LUC2, unlike FUS8 in fusarin C biosynthesis, is not enough for the full oxidation of the C-20 methyl group into carboxylic acid, which is a prerequisite for the final methylation step. The aldehyde dehydrogenase LUC3 is involved in the biosynthesis by further oxidation of the C-20 alcoholic analog prelucilactaene G into a carboxylic derivative. This unidentified carboxylic derivative may be converted to demethyllucilactaene. As the last step, the methyltransferase LUC1 methylates the hydroxyl group at C-21 of demethyllucilactaene to generate lucilactaene. In Fusarium sp, this protein is Hybrid PKS-NRPS synthetase LUC5.